The chain runs to 389 residues: Chalcone synthase (389 aa).

C164 is a catalytic residue.

The protein belongs to the thiolase-like superfamily. Chalcone/stilbene synthases family.

The catalysed reaction is (E)-4-coumaroyl-CoA + 3 malonyl-CoA + 3 H(+) = 2',4,4',6'-tetrahydroxychalcone + 3 CO2 + 4 CoA. It functions in the pathway secondary metabolite biosynthesis; flavonoid biosynthesis. The primary product of this enzyme is 4,2',4',6'-tetrahydroxychalcone (also termed naringenin-chalcone or chalcone) which can under specific conditions spontaneously isomerize into naringenin. The polypeptide is Chalcone synthase (CHS1) (Casuarina glauca (Swamp oak)).